The following is a 556-amino-acid chain: Glutamine--tRNA ligase (556 aa).

A 'HIGH' region motif is present at residues 39 to 49 (PEPNGYLHIGH). ATP-binding positions include 40–42 (EPN) and 46–52 (HIGHAKS). L-glutamine-binding residues include Asp72 and Tyr217. Residues Thr236 and 267–268 (RL) each bind ATP. A 'KMSKS' region motif is present at residues 274–278 (LTSKR).

The protein belongs to the class-I aminoacyl-tRNA synthetase family. Monomer.

The protein localises to the cytoplasm. It catalyses the reaction tRNA(Gln) + L-glutamine + ATP = L-glutaminyl-tRNA(Gln) + AMP + diphosphate. This chain is Glutamine--tRNA ligase, found in Haemophilus ducreyi (strain 35000HP / ATCC 700724).